Consider the following 783-residue polypeptide: Protein involved in starch initiation 1 (783 aa).

The transit peptide at 1–27 (MGFSQAIRLNLASFSSPSPCDYCLTRV) directs the protein to the chloroplast. Coiled-coil stretches lie at residues 128 to 309 (LHDA…LKEE), 345 to 432 (LVFS…LELA), and 457 to 512 (LQEK…LKAL).

Interacts with PTST2; the interaction is essential for the initiation of starch granules biosynthesis in leaf chloroplasts. Interacts with SS4; the interaction is essential for the initiation of starch granules biosynthesis in leaf chloroplasts.

The protein localises to the plastid. It is found in the chloroplast. Its function is as follows. Required for the initiation of starch granules biosynthesis in leaf chloroplasts. Involved in determining starch granule number and size in chloroplasts. The polypeptide is Protein involved in starch initiation 1 (Arabidopsis thaliana (Mouse-ear cress)).